A 332-amino-acid chain; its full sequence is Biotin synthase (332 aa).

Residues 47–273 (YYGNKVKLNM…MNPTKEIRIA (227 aa)) form the Radical SAM core domain. Residues Cys-65, Cys-69, and Cys-72 each coordinate [4Fe-4S] cluster. The [2Fe-2S] cluster site is built by Cys-109, Cys-141, Cys-201, and Arg-271.

This sequence belongs to the radical SAM superfamily. Biotin synthase family. In terms of assembly, homodimer. The cofactor is [4Fe-4S] cluster. It depends on [2Fe-2S] cluster as a cofactor.

It catalyses the reaction (4R,5S)-dethiobiotin + (sulfur carrier)-SH + 2 reduced [2Fe-2S]-[ferredoxin] + 2 S-adenosyl-L-methionine = (sulfur carrier)-H + biotin + 2 5'-deoxyadenosine + 2 L-methionine + 2 oxidized [2Fe-2S]-[ferredoxin]. The protein operates within cofactor biosynthesis; biotin biosynthesis; biotin from 7,8-diaminononanoate: step 2/2. Functionally, catalyzes the conversion of dethiobiotin (DTB) to biotin by the insertion of a sulfur atom into dethiobiotin via a radical-based mechanism. The chain is Biotin synthase from Geobacillus thermodenitrificans (strain NG80-2).